Reading from the N-terminus, the 274-residue chain is Lipoprotein E (274 aa).

An N-terminal signal peptide occupies residues 1–20 (MKTTLKMTALAALSAFVLAG). A lipid anchor (N-palmitoyl cysteine) is attached at cysteine 21. Cysteine 21 carries the S-diacylglycerol cysteine lipid modification.

It is found in the cell outer membrane. This chain is Lipoprotein E (hel), found in Haemophilus influenzae (strain ATCC 51907 / DSM 11121 / KW20 / Rd).